The sequence spans 351 residues: MTEDNPQFNQWYEQDTEVDHLLRDAAANDEEQRSELSLRPQFLREYIGQEALKEELNVYISAAKQREEALDHVLLFGPPGLGKTTLAMIIANEMNVNIKTTSGPAIEKPGDLVALLNELEPGDILFIDEIHRIPTNIEEIMYSAMEDYFVDIMVGQGPTARPVHFPLPPFTLIGATTRPGMLSKPLRDRFGIINSLQYYTPEELQQIVVRTADIFNAPIKSEGAYEISLRSRGTPRIANRLLKRVRDFAQVEGKDAIDKNIVTIGLDKLRVDNRGLDETDHKLLETMIEYYKGGPVGLNTIAANIGEESETLEAMVEPYLLQIGFLQRTPRGRVVTEAGYTHLGHAYQRKL.

A large ATPase domain (RuvB-L) region spans residues 4–199 (DNPQFNQWYE…FGIINSLQYY (196 aa)). ATP contacts are provided by residues Leu-38, Arg-39, Gly-80, Lys-83, Thr-84, Thr-85, 146–148 (EDY), Arg-189, Tyr-199, and Arg-236. Thr-84 lines the Mg(2+) pocket. Positions 200–270 (TPEELQQIVV…IVTIGLDKLR (71 aa)) are small ATPAse domain (RuvB-S). Residues 273 to 351 (NRGLDETDHK…HLGHAYQRKL (79 aa)) form a head domain (RuvB-H) region. Arg-328 and Arg-333 together coordinate DNA.

The protein belongs to the RuvB family. In terms of assembly, homohexamer. Forms an RuvA(8)-RuvB(12)-Holliday junction (HJ) complex. HJ DNA is sandwiched between 2 RuvA tetramers; dsDNA enters through RuvA and exits via RuvB. An RuvB hexamer assembles on each DNA strand where it exits the tetramer. Each RuvB hexamer is contacted by two RuvA subunits (via domain III) on 2 adjacent RuvB subunits; this complex drives branch migration. In the full resolvosome a probable DNA-RuvA(4)-RuvB(12)-RuvC(2) complex forms which resolves the HJ.

The protein resides in the cytoplasm. It carries out the reaction ATP + H2O = ADP + phosphate + H(+). Functionally, the RuvA-RuvB-RuvC complex processes Holliday junction (HJ) DNA during genetic recombination and DNA repair, while the RuvA-RuvB complex plays an important role in the rescue of blocked DNA replication forks via replication fork reversal (RFR). RuvA specifically binds to HJ cruciform DNA, conferring on it an open structure. The RuvB hexamer acts as an ATP-dependent pump, pulling dsDNA into and through the RuvAB complex. RuvB forms 2 homohexamers on either side of HJ DNA bound by 1 or 2 RuvA tetramers; 4 subunits per hexamer contact DNA at a time. Coordinated motions by a converter formed by DNA-disengaged RuvB subunits stimulates ATP hydrolysis and nucleotide exchange. Immobilization of the converter enables RuvB to convert the ATP-contained energy into a lever motion, pulling 2 nucleotides of DNA out of the RuvA tetramer per ATP hydrolyzed, thus driving DNA branch migration. The RuvB motors rotate together with the DNA substrate, which together with the progressing nucleotide cycle form the mechanistic basis for DNA recombination by continuous HJ branch migration. Branch migration allows RuvC to scan DNA until it finds its consensus sequence, where it cleaves and resolves cruciform DNA. The sequence is that of Holliday junction branch migration complex subunit RuvB from Leuconostoc mesenteroides subsp. mesenteroides (strain ATCC 8293 / DSM 20343 / BCRC 11652 / CCM 1803 / JCM 6124 / NCDO 523 / NBRC 100496 / NCIMB 8023 / NCTC 12954 / NRRL B-1118 / 37Y).